The sequence spans 511 residues: 2-isopropylmalate synthase (511 aa).

One can recognise a Pyruvate carboxyltransferase domain in the interval 6 to 269; the sequence is IIIFDTTLRD…YTDIKCENIF (264 aa). 4 residues coordinate Mn(2+): Asp-15, His-203, His-205, and Asn-239. The interval 394–511 is regulatory domain; sequence VLEKLSVISG…SLKVEERKMA (118 aa).

This sequence belongs to the alpha-IPM synthase/homocitrate synthase family. LeuA type 1 subfamily. As to quaternary structure, homodimer. Mn(2+) serves as cofactor.

It is found in the cytoplasm. It carries out the reaction 3-methyl-2-oxobutanoate + acetyl-CoA + H2O = (2S)-2-isopropylmalate + CoA + H(+). It participates in amino-acid biosynthesis; L-leucine biosynthesis; L-leucine from 3-methyl-2-oxobutanoate: step 1/4. In terms of biological role, catalyzes the condensation of the acetyl group of acetyl-CoA with 3-methyl-2-oxobutanoate (2-ketoisovalerate) to form 3-carboxy-3-hydroxy-4-methylpentanoate (2-isopropylmalate). This chain is 2-isopropylmalate synthase, found in Campylobacter jejuni subsp. jejuni serotype O:2 (strain ATCC 700819 / NCTC 11168).